The sequence spans 98 residues: U-scoloptoxin(16)-Er9a (98 aa).

The first 24 residues, 1–24 (MVSYLCMSVSSGWLSIGKIAIKDG), serve as a signal peptide directing secretion.

Belongs to the scoloptoxin-16 family. Contains 4 disulfide bonds. Expressed by the venom gland.

It is found in the secreted. The chain is U-scoloptoxin(16)-Er9a from Ethmostigmus rubripes (Giant centipede).